The chain runs to 70 residues: Sporulation protein YhaL (70 aa).

Residues 3–23 (FFPWWVYLCIVGIIFSAYKLV) traverse the membrane as a helical segment. Residues 48–70 (MEKERERRSSQQHEEENQNHSIA) are disordered.

It localises to the cell membrane. Functionally, required for efficient sporulation. This Bacillus subtilis (strain 168) protein is Sporulation protein YhaL (yhaL).